A 72-amino-acid polypeptide reads, in one-letter code: DNA-directed RNA polymerase subunit omega (72 aa).

This sequence belongs to the RNA polymerase subunit omega family. In terms of assembly, the RNAP catalytic core consists of 2 alpha, 1 beta, 1 beta' and 1 omega subunit. When a sigma factor is associated with the core the holoenzyme is formed, which can initiate transcription.

It catalyses the reaction RNA(n) + a ribonucleoside 5'-triphosphate = RNA(n+1) + diphosphate. Its function is as follows. Promotes RNA polymerase assembly. Latches the N- and C-terminal regions of the beta' subunit thereby facilitating its interaction with the beta and alpha subunits. This chain is DNA-directed RNA polymerase subunit omega (rpoZ), found in Clostridium tetani (strain Massachusetts / E88).